The sequence spans 431 residues: O-Mevalon transferase macI (431 aa).

N-linked (GlcNAc...) asparagine glycosylation is present at Asn176. Transmembrane regions (helical) follow at residues 198 to 218 (IYALIVCGFAITIYSHFAILM), 301 to 321 (LLMMSFVISGLIHACGTYQVT), 336 to 356 (YFALQGMAIIAEDFGCWVLGI), and 404 to 424 (LFAALELVRVSAVAVPGNFVA).

It belongs to the wax synthase family.

The protein resides in the membrane. It functions in the pathway secondary metabolite biosynthesis; terpenoid biosynthesis. In terms of biological role, O-Mevalon transferase; part of the gene cluster that mediates the biosynthesis of macrophorins, isoprenoid epoxycyclohexenones containing cyclized drimane moieties. The first step of the pathway is the synthesis of 6-methylsalicylic acid (6-MSA) by the polyketide synthase macA. 6-MSA is then converted to m-cresol by the decarboxylase macB. The cytochrome P450 monooxygenase macC then catalyzes the oxidation of m-cresol to toluquinol. Epoxidation of toluquinol is then performed by the short chain dehydrogenase macD, with the help of macE, and a further prenylation by macG leads to 7-deacetoxyyanuthone A. The next step is the hydroxylation of C-22 of 7-deacetoxyyanuthone A by the cytochrome P450 monooxygenase macH to yield 22-deacetylyanuthone A. O-Mevalon transferase macI then attaches mevalon to the hydroxyl group of 22-deacetylyanuthone A to produce yanuthone E. The terpene cyclase macJ catalyzes the cyclization of 22-deacetylyanuthone A to macrophorin A. MacJ is also able to catalyze cyclization of yanuthone E and 7-deacetoxyyanuthone A to their corresponding macrophorins. The macJ products can be further modified by macH and macJ, as well as by the FAD-dependent monooxygenase macF, to produce additional macrophorins, including 4'-oxomacrophorin A, 4'-oxomacrophorin D and 4'-oxomacrophorin E. The chain is O-Mevalon transferase macI from Penicillium terrestre.